The primary structure comprises 232 residues: MSACQTPIIVALDFPTRDAALKLADQLDPKLCRVKVGKELFTSCAAEIVGTLRDKGFEVFLDLKFHDIPNTTAMAVKAAAEMGVWMVNVHCSGGLRMMAACREELDKRSGPQPLLIGVTVLTSMEREDLAGIGLDIEPQEQVLRLAALAEKAGMDGLVCSALEATALKTAHPSLQLVTPGIRPAGSAQDDQRRILTPRQALDAGSDYLVIGRPISQAADPAKALASVVAELA.

Substrate-binding positions include Asp-13, Lys-35, 62 to 71 (DLKFHDIPNT), Thr-122, Arg-182, Gln-191, Gly-211, and Arg-212. The active-site Proton donor is Lys-64.

This sequence belongs to the OMP decarboxylase family. Type 1 subfamily. Homodimer.

It catalyses the reaction orotidine 5'-phosphate + H(+) = UMP + CO2. It participates in pyrimidine metabolism; UMP biosynthesis via de novo pathway; UMP from orotate: step 2/2. Functionally, catalyzes the decarboxylation of orotidine 5'-monophosphate (OMP) to uridine 5'-monophosphate (UMP). This chain is Orotidine 5'-phosphate decarboxylase, found in Pseudomonas fluorescens (strain Pf0-1).